The primary structure comprises 1345 residues: Membrane-anchored lipid-binding protein LAM4 (1345 aa).

Over 1 to 1197 (MTRDSKKKHH…NFSSEIFMNK (1197 aa)) the chain is Cytoplasmic. Disordered stretches follow at residues 51–80 (RVGGNPDIPSLLKPETFTESPAKGSQKAAA), 115–134 (SLKGRFQDGNSNSNSVPSLS), 139–164 (EKEKLQSGKREGSSNQAEEKTPDGHD), 190–302 (DADN…SLDD), 356–397 (LPEA…KPRR), 425–447 (SFNSSNGLTNNDPEYEDREPREM), and 489–531 (STII…NGRQ). T66 is modified (phosphothreonine). Residues 216 to 228 (SENSTNNKNTSST) are compositionally biased toward low complexity. A compositionally biased stretch (polar residues) spans 246 to 271 (SKSSTPSNQQLNTTEAGSKSKPSSLS). Positions 283 to 294 (HSNSHSSSNAIS) are enriched in low complexity. The span at 425–436 (SFNSSNGLTNND) shows a compositional bias: polar residues. A compositionally biased stretch (low complexity) spans 498-516 (SNGRPSSGLRRSSSKSFSS). One can recognise a GRAM domain in the interval 549–616 (EFHAIFKDSG…FKTIVQIEKR (68 aa)). Low complexity predominate over residues 665 to 677 (SNSNNTNSSSNSI). A disordered region spans residues 665-722 (SNSNNTNSSSNSISDDENDDYDDDYDDYGDDDDDLYDNSNNISDSTDMTSSVSIGKPE). Over residues 678-700 (SDDENDDYDDDYDDYGDDDDDLY) the composition is skewed to acidic residues. A Phosphoserine modification is found at S747. 2 VASt domains span residues 758–930 (NEKL…TRSA) and 967–1139 (DDSI…SRAK). A disordered region spans residues 930–963 (ATKRKRSSKENTVTVSTLPKMEPSSHAPTEPDIQ). Basic residues predominate over residues 1141–1158 (KKPVKKVMKSHDKHRPFH). The interval 1141 to 1172 (KKPVKKVMKSHDKHRPFHSKVEQKSSESRKSD) is disordered. Positions 1159 to 1172 (SKVEQKSSESRKSD) are enriched in basic and acidic residues. The chain crosses the membrane as a helical span at residues 1198–1218 (LLSPQKLFLILGLTIMLFWSP). Residues 1219–1345 (RLHVFQEKNN…NIERDANDLS (127 aa)) are Lumenal-facing.

Belongs to the YSP2 family.

It is found in the endoplasmic reticulum membrane. Its function is as follows. May be involved in sterol transfer between intracellular membranes. In Saccharomyces cerevisiae (strain ATCC 204508 / S288c) (Baker's yeast), this protein is Membrane-anchored lipid-binding protein LAM4.